Reading from the N-terminus, the 30-residue chain is Trypsin inhibitor 7 (30 aa).

Intrachain disulfides connect cysteine 4-cysteine 21, cysteine 11-cysteine 23, and cysteine 17-cysteine 29.

It belongs to the protease inhibitor I7 (squash-type serine protease inhibitor) family.

The protein resides in the secreted. Functionally, strongly inhibits trypsin, weakly inhibits chymotrypsin. The sequence is that of Trypsin inhibitor 7 from Cyclanthera pedata (Achocha).